We begin with the raw amino-acid sequence, 418 residues long: uncharacterized protein (418 aa).

The segment covering 282–297 has biased composition (basic and acidic residues); the sequence is EEHSSIAKLDSEEKIR. Positions 282–346 are disordered; it reads EEHSSIAKLD…SASVDDVSEE (65 aa). Over residues 304–316 the composition is skewed to low complexity; sequence SSTSLSPDPTSDN. Polar residues predominate over residues 322–337; the sequence is WVSSQDTSKNSSNLAS.

This is an uncharacterized protein from Schizosaccharomyces pombe (strain 972 / ATCC 24843) (Fission yeast).